The chain runs to 392 residues: Anhydro-N-acetylmuramic acid kinase (392 aa).

Residue 22–29 (GTSMDGVD) coordinates ATP.

This sequence belongs to the anhydro-N-acetylmuramic acid kinase family.

It carries out the reaction 1,6-anhydro-N-acetyl-beta-muramate + ATP + H2O = N-acetyl-D-muramate 6-phosphate + ADP + H(+). Its pathway is amino-sugar metabolism; 1,6-anhydro-N-acetylmuramate degradation. It participates in cell wall biogenesis; peptidoglycan recycling. Catalyzes the specific phosphorylation of 1,6-anhydro-N-acetylmuramic acid (anhMurNAc) with the simultaneous cleavage of the 1,6-anhydro ring, generating MurNAc-6-P. Is required for the utilization of anhMurNAc either imported from the medium or derived from its own cell wall murein, and thus plays a role in cell wall recycling. The protein is Anhydro-N-acetylmuramic acid kinase of Burkholderia mallei (strain NCTC 10229).